A 144-amino-acid polypeptide reads, in one-letter code: Large ribosomal subunit protein uL15 (144 aa).

Residues 1 to 51 are disordered; the sequence is MKLNELKPATGSRSKRLRKGRGLSSGHGFTSGRGTKGQKAHGKTRLGFEGG. Gly residues predominate over residues 23 to 35; that stretch reads LSSGHGFTSGRGT.

The protein belongs to the universal ribosomal protein uL15 family. Part of the 50S ribosomal subunit.

In terms of biological role, binds to the 23S rRNA. This chain is Large ribosomal subunit protein uL15, found in Limosilactobacillus reuteri (strain DSM 20016) (Lactobacillus reuteri).